A 267-amino-acid polypeptide reads, in one-letter code: 7alpha-hydroxysteroid dehydrogenase (267 aa).

Residues 13 to 18 (SATRGI), arginine 38, 63 to 64 (DA), and asparagine 90 contribute to the NADP(+) site. Cholate is bound by residues serine 145 and tyrosine 158. Residues tyrosine 158, lysine 162, and 191 to 195 (IATDA) contribute to the NADP(+) site. Tyrosine 158 serves as the catalytic Proton acceptor.

This sequence belongs to the short-chain dehydrogenases/reductases (SDR) family. In terms of assembly, homotetramer.

The catalysed reaction is cholate + NADP(+) = 3alpha,12alpha-dihydroxy-7-oxo-5beta-cholanate + NADPH + H(+). It catalyses the reaction chenodeoxycholate + NADP(+) = 7-oxolithocholate + NADPH + H(+). Its function is as follows. 7alpha-hydroxysteroid dehydrogenase that catalyzes the NADP(+)-dependent oxidation of the 7alpha-hydroxy group of 7alpha-hydroxysteroids, such as the major human bile acids cholate and chenodeoxycholate, to the corresponding 7-oxosteroids. Is thus liley involved in the metabolism of primary bile acids. The polypeptide is 7alpha-hydroxysteroid dehydrogenase (Paraclostridium sordellii (Clostridium sordellii)).